The following is a 97-amino-acid chain: Protein SENESCENCE-ASSOCIATED GENE 21, mitochondrial (97 aa).

A mitochondrion-targeting transit peptide spans 1-46 (MARSISNVKIVSAFVSRELSNAIFRRGYAATAAQGSVSSGGRSGAV).

Belongs to the LEA type 3 family. In terms of tissue distribution, expressed in roots, stems leaves and flowers, but not in seeds. In short days, observed in cotyledons and roots but absent from rosette leaves.

Its subcellular location is the mitochondrion. Mediates tolerance to oxidative stresses (e.g. hydrogen peroxide H(2)O(2), diamide, menadione and tert-butyl hydroperoxide) by minimizing the negative effects of oxidation and monitoring photosynthesis during stress. Promotes root development. Prevents premature aging (e.g. senescence and flowering). Involved in resistance against compatible pathogens such as Botrytis cinerea and Pseudomonas syringae pv. tomato. The protein is Protein SENESCENCE-ASSOCIATED GENE 21, mitochondrial of Arabidopsis thaliana (Mouse-ear cress).